The chain runs to 949 residues: AP-1 complex subunit beta-1 (949 aa).

Lys-318 is modified (N6-acetyllysine). Residue Tyr-574 is modified to 3'-nitrotyrosine. Residues 592–623 (SLPPRTASSESTESPEAAPAGAPASDQPDVIP) form a disordered region. The span at 594 to 616 (PPRTASSESTESPEAAPAGAPAS) shows a compositional bias: low complexity.

The protein belongs to the adaptor complexes large subunit family. In terms of assembly, adaptor protein complex 1 (AP-1) is a heterotetramer composed of two large adaptins (gamma-type subunit AP1G1 and beta-type subunit AP1B1), a medium adaptin (mu-type subunit AP1M1 or AP1M2) and a small adaptin (sigma-type subunit AP1S1 or AP1S2 or AP1S3). The N-terminus is blocked.

It localises to the golgi apparatus. Its subcellular location is the cytoplasmic vesicle. The protein localises to the clathrin-coated vesicle membrane. Subunit of clathrin-associated adaptor protein complex 1 that plays a role in protein sorting in the late-Golgi/trans-Golgi network (TGN) and/or endosomes. The AP complexes mediate both the recruitment of clathrin to membranes and the recognition of sorting signals within the cytosolic tails of transmembrane cargo molecules. In Rattus norvegicus (Rat), this protein is AP-1 complex subunit beta-1 (Ap1b1).